The sequence spans 327 residues: Phenylalanine--tRNA ligase alpha subunit (327 aa).

E252 is a Mg(2+) binding site.

This sequence belongs to the class-II aminoacyl-tRNA synthetase family. Phe-tRNA synthetase alpha subunit type 1 subfamily. In terms of assembly, tetramer of two alpha and two beta subunits. It depends on Mg(2+) as a cofactor.

It is found in the cytoplasm. The enzyme catalyses tRNA(Phe) + L-phenylalanine + ATP = L-phenylalanyl-tRNA(Phe) + AMP + diphosphate + H(+). The protein is Phenylalanine--tRNA ligase alpha subunit of Shewanella sp. (strain MR-7).